Consider the following 59-residue polypeptide: Three-finger toxin MS1 (59 aa).

Cystine bridges form between C3–C22, C17–C39, C41–C52, and C53–C58.

The protein belongs to the three-finger toxin family. Short-chain subfamily. Type I alpha-neurotoxin sub-subfamily. As to expression, expressed by the venom gland.

The protein resides in the secreted. In terms of biological role, produces peripheral paralysis by blocking neuromuscular transmission at the postsynaptic site. Binds to and inhibits the endogenous nicotinic acetylcholine receptors (nAChR) in human rhabdomyosarcoma TE 671 cell line with an IC(50) of 48.2 mM. This neurotoxin is lethal to mice by intraperitoneal injection and to zebrafish by injection at the back of the dorsolateral region. In Micrurus surinamensis (Surinam coral snake), this protein is Three-finger toxin MS1.